A 187-amino-acid chain; its full sequence is 1,6-anhydro-N-acetylmuramyl-L-alanine amidase AmpD (187 aa).

The N-acetylmuramoyl-L-alanine amidase domain maps to 29–167; it reads SLLVVHNISL…TPDRKTDPGP (139 aa). A Zn(2+)-binding site is contributed by His-34. The active-site Proton acceptor is Glu-116. Residues His-154 and Asp-164 each contribute to the Zn(2+) site.

This sequence belongs to the N-acetylmuramoyl-L-alanine amidase 2 family. Zn(2+) is required as a cofactor.

Its subcellular location is the cytoplasm. The enzyme catalyses Hydrolyzes the link between N-acetylmuramoyl residues and L-amino acid residues in certain cell-wall glycopeptides.. Its function is as follows. Involved in cell wall peptidoglycan recycling. Specifically cleaves the amide bond between the lactyl group of N-acetylmuramic acid and the alpha-amino group of the L-alanine in degradation products containing an anhydro N-acetylmuramyl moiety. This Salmonella typhimurium (strain LT2 / SGSC1412 / ATCC 700720) protein is 1,6-anhydro-N-acetylmuramyl-L-alanine amidase AmpD (ampD).